The chain runs to 358 residues: Probable dual-specificity RNA methyltransferase RlmN 1 (358 aa).

Residues 101-326 form the Radical SAM core domain; the sequence is MQAGGTLCIS…REKGFYTLLR (226 aa). Cysteines 108 and 337 form a disulfide. [4Fe-4S] cluster is bound by residues Cys115, Cys119, and Cys122. S-adenosyl-L-methionine contacts are provided by residues 162–163, Ser194, 218–220, and Asn294; these read GE and SLN. Cys337 acts as the S-methylcysteine intermediate in catalysis.

The protein belongs to the radical SAM superfamily. RlmN family. [4Fe-4S] cluster is required as a cofactor.

The protein localises to the cytoplasm. The catalysed reaction is adenosine(2503) in 23S rRNA + 2 reduced [2Fe-2S]-[ferredoxin] + 2 S-adenosyl-L-methionine = 2-methyladenosine(2503) in 23S rRNA + 5'-deoxyadenosine + L-methionine + 2 oxidized [2Fe-2S]-[ferredoxin] + S-adenosyl-L-homocysteine. It catalyses the reaction adenosine(37) in tRNA + 2 reduced [2Fe-2S]-[ferredoxin] + 2 S-adenosyl-L-methionine = 2-methyladenosine(37) in tRNA + 5'-deoxyadenosine + L-methionine + 2 oxidized [2Fe-2S]-[ferredoxin] + S-adenosyl-L-homocysteine. Functionally, specifically methylates position 2 of adenine 2503 in 23S rRNA and position 2 of adenine 37 in tRNAs. This chain is Probable dual-specificity RNA methyltransferase RlmN 1, found in Protochlamydia amoebophila (strain UWE25).